The primary structure comprises 426 residues: Serine--tRNA ligase (426 aa).

229-231 (TAE) contributes to the L-serine binding site. 260 to 262 (RSE) serves as a coordination point for ATP. Glutamate 283 contacts L-serine. 347–350 (EIAS) contacts ATP. Position 383 (serine 383) interacts with L-serine.

This sequence belongs to the class-II aminoacyl-tRNA synthetase family. Type-1 seryl-tRNA synthetase subfamily. In terms of assembly, homodimer. The tRNA molecule binds across the dimer.

Its subcellular location is the cytoplasm. The catalysed reaction is tRNA(Ser) + L-serine + ATP = L-seryl-tRNA(Ser) + AMP + diphosphate + H(+). It carries out the reaction tRNA(Sec) + L-serine + ATP = L-seryl-tRNA(Sec) + AMP + diphosphate + H(+). It functions in the pathway aminoacyl-tRNA biosynthesis; selenocysteinyl-tRNA(Sec) biosynthesis; L-seryl-tRNA(Sec) from L-serine and tRNA(Sec): step 1/1. Catalyzes the attachment of serine to tRNA(Ser). Is also able to aminoacylate tRNA(Sec) with serine, to form the misacylated tRNA L-seryl-tRNA(Sec), which will be further converted into selenocysteinyl-tRNA(Sec). This Rickettsia bellii (strain OSU 85-389) protein is Serine--tRNA ligase.